Here is a 108-residue protein sequence, read N- to C-terminus: MNPGQLAEDRAMKHLCAHGLRLEARNVRYPFGEIDLVMREGRVYVFVEVKFRTPKGFGDAVQALSAAQQQRLRRAATHYLQCHRIDAPCRFDMVAITGDKLEWIKDAF.

Belongs to the UPF0102 family.

The polypeptide is UPF0102 protein Sama_3355 (Shewanella amazonensis (strain ATCC BAA-1098 / SB2B)).